Consider the following 174-residue polypeptide: Large ribosomal subunit protein uL15 (174 aa).

Disordered stretches follow at residues 1–56 (MKLH…GQMR) and 150–174 (VERRSRSRGPNPPRHHRKAEATPGA). Residues 21-35 (RGIGSGKGKTGGKGM) show a composition bias toward gly residues.

Belongs to the universal ribosomal protein uL15 family. In terms of assembly, part of the 50S ribosomal subunit.

Binds to the 23S rRNA. This Roseiflexus castenholzii (strain DSM 13941 / HLO8) protein is Large ribosomal subunit protein uL15.